The following is a 412-amino-acid chain: Putative phosphate permease PF1020 (412 aa).

A run of 10 helical transmembrane segments spans residues 7–27 (MLAD…AWAI), 50–70 (AVII…KTVT), 88–108 (VLIF…VIAT), 119–139 (SIIG…IVNW), 143–163 (IKVV…AYLV), 187–207 (FWIG…VLHG), 213–233 (GFLK…SLIL), 298–318 (WILA…GYKV), 335–355 (FTID…GMPI), and 384–404 (DIII…GIIF).

The protein belongs to the inorganic phosphate transporter (PiT) (TC 2.A.20) family.

The protein localises to the cell membrane. In terms of biological role, potential transporter for phosphate. The protein is Putative phosphate permease PF1020 of Pyrococcus furiosus (strain ATCC 43587 / DSM 3638 / JCM 8422 / Vc1).